A 445-amino-acid polypeptide reads, in one-letter code: MHGHSRNGQAHVPRRKRRNRFVKKNGQCNVYFANLSNKSQRYMADIFTTCVDTRWRYMLMIFSAAFLVSWLFFGLLFWCIAFFHGDLEASPGVPAAGGPAAGGGGAAPVAPKPCIMHVNGFLGAFLFSVETQTTIGYGFRCVTEECPLAVIAVVVQSIVGCVIDSFMIGTIMAKMARPKKRAQTLLFSHHAVISVRDGKLCLMWRVGNLRKSHIVEAHVRAQLIKPYMTQEGEYLPLDQRDLNVGYDIGLDRIFLVSPIIIVHEIDEDSPLYGMGKEELESEDFEIVVILEGMVEATAMTTQARSSYLASEILWGHRFEPVVFEEKSHYKVDYSRFHKTYEVAGTPCCSARELQESKITVLPAPPPPPSAFCYENELALMSQEEEEMEEEAAAAAAVAAGLGLEAGSKEEAGIIRMLEFGSHLDLERMQASLPLDNISYRRESAI.

Over 1-55 (MHGHSRNGQAHVPRRKRRNRFVKKNGQCNVYFANLSNKSQRYMADIFTTCVDTRW) the chain is Cytoplasmic. A helical membrane pass occupies residues 56–80 (RYMLMIFSAAFLVSWLFFGLLFWCI). The Extracellular segment spans residues 81–120 (AFFHGDLEASPGVPAAGGPAAGGGGAAPVAPKPCIMHVNG). A val/Gly/Ala/Pro stretch region spans residues 91-111 (PGVPAAGGPAAGGGGAAPVAP). An intramembrane region (helical; Pore-forming) is located at residues 121–132 (FLGAFLFSVETQ). The pore-forming intramembrane region spans 133–139 (TTIGYGF). A Selectivity filter motif is present at residues 134-139 (TIGYGF). Over 140 to 148 (RCVTEECPL) the chain is Extracellular. Residues 149 to 170 (AVIAVVVQSIVGCVIDSFMIGT) traverse the membrane as a helical segment. Residues 171–445 (IMAKMARPKK…NISYRRESAI (275 aa)) are Cytoplasmic-facing. Positions 443–445 (SAI) match the PDZ-binding motif.

This sequence belongs to the inward rectifier-type potassium channel (TC 1.A.2.1) family. KCNJ4 subfamily. In terms of assembly, homomultimeric and heteromultimeric association with KCNJ2 and KCNJ12. Interacts with DLG2 and DLG4. Associates, via its PDZ-recognition domain, with a complex containing LIN7A, LIN7B, LIN7C, DLG1, CASK and APBA1. Interacts with TAX1BP3. TAX1BP3 competes with LIN7 family members for KCNJ4 binding. As to expression, heart, skeletal muscle, and several different brain regions including the hippocampus.

The protein localises to the cell membrane. Its subcellular location is the postsynaptic cell membrane. It is found in the cytoplasmic vesicle membrane. The catalysed reaction is K(+)(in) = K(+)(out). In terms of biological role, inward rectifier potassium channels are characterized by a greater tendency to allow potassium to flow into the cell rather than out of it. Their voltage dependence is regulated by the concentration of extracellular potassium; as external potassium is raised, the voltage range of the channel opening shifts to more positive voltages. The inward rectification is mainly due to the blockage of outward current by internal magnesium. Can be blocked by extracellular barium and cesium. This chain is Inward rectifier potassium channel 4 (KCNJ4), found in Homo sapiens (Human).